The sequence spans 207 residues: Dephospho-CoA kinase (207 aa).

The DPCK domain occupies 4 to 203 (VIGLTGGIAS…EEGYIEKPNY (200 aa)). ATP is bound at residue 12-17 (ASGKST).

It belongs to the CoaE family.

It localises to the cytoplasm. It catalyses the reaction 3'-dephospho-CoA + ATP = ADP + CoA + H(+). Its pathway is cofactor biosynthesis; coenzyme A biosynthesis; CoA from (R)-pantothenate: step 5/5. In terms of biological role, catalyzes the phosphorylation of the 3'-hydroxyl group of dephosphocoenzyme A to form coenzyme A. This is Dephospho-CoA kinase from Staphylococcus aureus (strain bovine RF122 / ET3-1).